Reading from the N-terminus, the 258-residue chain is Apolipoprotein A-I (258 aa).

The first 18 residues, 1–18, serve as a signal peptide directing secretion; sequence MKFLVLALTILLAAGTQA. The 3 X approximate tandem repeats stretch occupies residues 32–63; it reads VKAALNMYIAQVKLTAQRSIDLLDDTEYKEYK. 2 consecutive repeat copies span residues 64–85 and 86–106. The interval 64–258 is 10 X approximate tandem repeats; it reads MQLSQSLDNL…WLSTRPSARP (195 aa). A 3; half-length repeat occupies 107–117; the sequence is KDVEDVRTQLE. 7 consecutive repeat copies span residues 118–139, 140–161, 162–183, 184–205, 206–227, 228–238, and 239–258. Residues 233-258 form a disordered region; sequence FKARWAPPPRRPSKSSWLSTRPSARP. A compositionally biased stretch (polar residues) spans 246-258; the sequence is KSSWLSTRPSARP.

It belongs to the apolipoprotein A1/A4/E family. In terms of tissue distribution, major protein of plasma HDL, also found in chylomicrons. Expressed in liver, intestine and muscle.

It is found in the secreted. Its function is as follows. Participates in the reverse transport of cholesterol from tissues to the liver for excretion by promoting cholesterol efflux from tissues and by acting as a cofactor for the lecithin cholesterol acyltransferase (LCAT). The chain is Apolipoprotein A-I (apoa1) from Salmo salar (Atlantic salmon).